A 445-amino-acid chain; its full sequence is GTPase Obg (445 aa).

The region spanning 7–164 is the Obg domain; that stretch reads PEFVDCVTVE…RKLRLEVKSI (158 aa). Positions 165 to 342 constitute an OBG-type G domain; that stretch reads ADVALVGFPS…FTLRLGEICQ (178 aa). GTP-binding positions include 171–178, 196–200, 217–220, 291–294, and 323–325; these read GFPSVGKS, FTTLH, DVPG, NKID, and SAV. Mg(2+) is bound by residues Ser-178 and Thr-198. The region spanning 357 to 434 is the OCT domain; it reads IPAKNTPEFS…IGGVIFTWDP (78 aa).

This sequence belongs to the TRAFAC class OBG-HflX-like GTPase superfamily. OBG GTPase family. As to quaternary structure, monomer. The cofactor is Mg(2+).

Its subcellular location is the cytoplasm. An essential GTPase which binds GTP, GDP and possibly (p)ppGpp with moderate affinity, with high nucleotide exchange rates and a fairly low GTP hydrolysis rate. Plays a role in control of the cell cycle, stress response, ribosome biogenesis and in those bacteria that undergo differentiation, in morphogenesis control. This Tropheryma whipplei (strain Twist) (Whipple's bacillus) protein is GTPase Obg.